We begin with the raw amino-acid sequence, 200 residues long: Methylamine utilization protein MauD (200 aa).

A helical membrane pass occupies residues 4 to 24; the sequence is FLIASNILLWLAFLGVTVVML. In terms of domain architecture, Thioredoxin spans 49–183; sequence PDIGDAAPEF…LESLLEADRT (135 aa).

Its subcellular location is the membrane. The protein operates within one-carbon metabolism; methylamine degradation. In terms of biological role, may be specifically involved in the processing, transport, and/or maturation of the MADH beta-subunit. The polypeptide is Methylamine utilization protein MauD (mauD) (Paracoccus denitrificans).